The sequence spans 429 residues: Isocitrate dehydrogenase [NADP] (429 aa).

Residue Thr-108 coordinates NADP(+). D-threo-isocitrate contacts are provided by Ser-117, Asn-119, Arg-123, Arg-133, and Arg-156. Residue Asp-308 coordinates Mg(2+). NADP(+) is bound by residues 340–346 (HGSAPKY), Asn-353, Tyr-393, and Arg-397.

Belongs to the isocitrate and isopropylmalate dehydrogenases family. In terms of assembly, homodimer. Mg(2+) serves as cofactor. Requires Mn(2+) as cofactor.

It catalyses the reaction D-threo-isocitrate + NADP(+) = 2-oxoglutarate + CO2 + NADPH. Catalyzes the oxidative decarboxylation of isocitrate to 2-oxoglutarate and carbon dioxide with the concomitant reduction of NADP(+). In Caldococcus noboribetus, this protein is Isocitrate dehydrogenase [NADP] (icd).